A 1172-amino-acid polypeptide reads, in one-letter code: Pesticidal crystal protein Cry1Ha (1172 aa).

It belongs to the delta endotoxin family.

Promotes colloidosmotic lysis by binding to the midgut epithelial cells of insects. In Bacillus thuringiensis, this protein is Pesticidal crystal protein Cry1Ha (cry1Ha).